A 203-amino-acid chain; its full sequence is ATP-dependent Clp protease proteolytic subunit (203 aa).

The active-site Nucleophile is Ser-107. Residue His-132 is part of the active site.

The protein belongs to the peptidase S14 family. In terms of assembly, fourteen ClpP subunits assemble into 2 heptameric rings which stack back to back to give a disk-like structure with a central cavity, resembling the structure of eukaryotic proteasomes.

It localises to the cytoplasm. It catalyses the reaction Hydrolysis of proteins to small peptides in the presence of ATP and magnesium. alpha-casein is the usual test substrate. In the absence of ATP, only oligopeptides shorter than five residues are hydrolyzed (such as succinyl-Leu-Tyr-|-NHMec, and Leu-Tyr-Leu-|-Tyr-Trp, in which cleavage of the -Tyr-|-Leu- and -Tyr-|-Trp bonds also occurs).. Its function is as follows. Cleaves peptides in various proteins in a process that requires ATP hydrolysis. Has a chymotrypsin-like activity. Plays a major role in the degradation of misfolded proteins. The polypeptide is ATP-dependent Clp protease proteolytic subunit (Shewanella loihica (strain ATCC BAA-1088 / PV-4)).